Here is a 199-residue protein sequence, read N- to C-terminus: Charged multivesicular body protein 1b (199 aa).

A coiled-coil region spans residues 26–48 (DKEEKAEKAKIKKAIQKGNMEVA). The interval 132 to 156 (MEDTMSSTTTLTTPQGQVDMLLQEM) is interaction with IST1. The interval 167–199 (ELPQGQTGSVGTSVASAEQDELSQRLARLRDQV) is disordered. The span at 170-182 (QGQTGSVGTSVAS) shows a compositional bias: polar residues. Residues 174–199 (GSVGTSVASAEQDELSQRLARLRDQV) are interaction with SPAST. Residues 178 to 199 (TSVASAEQDELSQRLARLRDQV) adopt a coiled-coil conformation. Residues 180-196 (VASAEQDELSQRLARLR) form an interaction with VPS4A, MITD1 and STAMBP region. Residues 180–199 (VASAEQDELSQRLARLRDQV) form an interaction with VTA1 region. Residues 183 to 199 (AEQDELSQRLARLRDQV) are interaction with VPS4B. An MIT-interacting motif motif is present at residues 186 to 196 (DELSQRLARLR).

Belongs to the SNF7 family. In terms of assembly, probable peripherally associated component of the endosomal sorting required for transport complex III (ESCRT-III). ESCRT-III components are thought to multimerize to form a flat lattice on the perimeter membrane of the endosome. Several assembly forms of ESCRT-III may exist that interact and act sequentially. Interacts with CHMP1A. Interacts with VTA1; the interaction probably involves the open conformation of CHMP1B. Interacts with CHMP2A. Interacts with VPS4A; the interaction is direct. Interacts with VPS4B; the interaction is direct. Interacts with SPAST (via MIT domain); the interaction is direct. Interacts with IST1. Interacts with MITD1. Interacts with STAMBP.

It localises to the cytoplasm. The protein localises to the cytosol. It is found in the endosome. Its subcellular location is the late endosome membrane. Its function is as follows. Probable peripherally associated component of the endosomal sorting required for transport complex III (ESCRT-III) which is involved in multivesicular bodies (MVBs) formation and sorting of endosomal cargo proteins into MVBs. MVBs contain intraluminal vesicles (ILVs) that are generated by invagination and scission from the limiting membrane of the endosome and mostly are delivered to lysosomes enabling degradation of membrane proteins, such as stimulated growth factor receptors, lysosomal enzymes and lipids. The MVB pathway appears to require the sequential function of ESCRT-O, -I,-II and -III complexes. ESCRT-III proteins mostly dissociate from the invaginating membrane before the ILV is released. The ESCRT machinery also functions in topologically equivalent membrane fission events, such as the terminal stages of cytokinesis and the budding of enveloped viruses (lentiviruses). ESCRT-III proteins are believed to mediate the necessary vesicle extrusion and/or membrane fission activities, possibly in conjunction with the AAA ATPase VPS4. Involved in cytokinesis. Involved in recruiting VPS4A and/or VPS4B and SPAST to the midbody of dividing cells. The sequence is that of Charged multivesicular body protein 1b (CHMP1B) from Bos taurus (Bovine).